The primary structure comprises 184 residues: ATP-dependent protease subunit HslV (184 aa).

Thr-2 is an active-site residue. The Na(+) site is built by Gly-157, Cys-160, and Thr-163.

It belongs to the peptidase T1B family. HslV subfamily. As to quaternary structure, a double ring-shaped homohexamer of HslV is capped on each side by a ring-shaped HslU homohexamer. The assembly of the HslU/HslV complex is dependent on binding of ATP.

It is found in the cytoplasm. The catalysed reaction is ATP-dependent cleavage of peptide bonds with broad specificity.. Allosterically activated by HslU binding. In terms of biological role, protease subunit of a proteasome-like degradation complex believed to be a general protein degrading machinery. The chain is ATP-dependent protease subunit HslV from Vibrio vulnificus (strain CMCP6).